The following is a 752-amino-acid chain: DNA topoisomerase 4 subunit A (752 aa).

Positions 31–494 (LPFIGDGLKP…EAKAMSEHDM (464 aa)) constitute a Topo IIA-type catalytic domain. Tyrosine 120 (O-(5'-phospho-DNA)-tyrosine intermediate) is an active-site residue. Disordered stretches follow at residues 472–492 (YGDD…MSEH) and 718–752 (TGER…DSEE). 2 stretches are compositionally biased toward basic and acidic residues: residues 473 to 492 (GDDR…MSEH) and 732 to 743 (QRIDRVEIDSPR).

This sequence belongs to the type II topoisomerase GyrA/ParC subunit family. ParC type 1 subfamily. As to quaternary structure, heterotetramer composed of ParC and ParE.

The protein localises to the cell membrane. The catalysed reaction is ATP-dependent breakage, passage and rejoining of double-stranded DNA.. Topoisomerase IV is essential for chromosome segregation. It relaxes supercoiled DNA. Performs the decatenation events required during the replication of a circular DNA molecule. This is DNA topoisomerase 4 subunit A from Escherichia coli O157:H7.